Consider the following 595-residue polypeptide: APOBEC1 complementation factor (595 aa).

RRM domains lie at 56 to 134 (CEIF…ASVD), 136 to 218 (CRLF…WAEP), and 231 to 303 (KILY…LAKP). The required for nuclear localization stretch occupies residues 360-409 (HFPATKGHLSNRALIRTPSVREIYMNVPVGAAGVRGLGGRGYLAYTGLGR).

Part of the apolipoprotein B mRNA editing complex with APOBEC1. Interacts with TNPO2; TNPO2 may be responsible for transport of A1CF into the nucleus. Interacts with SYNCRIP. Interacts with CELF2/CUGBP2. Interacts with RBM47. In terms of tissue distribution, expressed primarily in liver, small intestine and kidney.

The protein localises to the nucleus. Its subcellular location is the endoplasmic reticulum. The protein resides in the cytoplasm. In terms of biological role, essential component of the apolipoprotein B mRNA editing enzyme complex which is responsible for the postranscriptional editing of a CAA codon for Gln to a UAA codon for stop in APOB mRNA. Binds to APOB mRNA and is probably responsible for docking the catalytic subunit, APOBEC1, to the mRNA to allow it to deaminate its target cytosine. The complex also seems to protect the edited APOB mRNA from nonsense-mediated decay. This chain is APOBEC1 complementation factor (A1cf), found in Mus musculus (Mouse).